We begin with the raw amino-acid sequence, 113 residues long: Non-specific lipid-transfer protein (113 aa).

Positions 1–24 are cleaved as a signal peptide; the sequence is AQVMLMAVALVLMLAAVPRAAVAI. Intrachain disulfides connect C26/C73, C36/C50, C51/C96, and C71/C110. D30 is lipidated: Cis-14-hydroxy-10,13-dioxo-7-heptadecenoic acid aspartate ester.

The protein belongs to the plant LTP family.

Its function is as follows. Plant non-specific lipid-transfer proteins transfer phospholipids as well as galactolipids across membranes. May play a role in wax or cutin deposition in the cell walls of expanding epidermal cells and certain secretory tissues. This chain is Non-specific lipid-transfer protein, found in Triticum aestivum (Wheat).